Consider the following 268-residue polypeptide: Shikimate dehydrogenase (NADP(+)) (268 aa).

Shikimate contacts are provided by residues 13-15 and Thr60; that span reads SLS. Lys64 (proton acceptor) is an active-site residue. Residue Glu76 participates in NADP(+) binding. Positions 85 and 100 each coordinate shikimate. NADP(+) contacts are provided by residues 124–128, 148–153, and Ile209; these read GAGGA and NRTMAR. Tyr211 serves as a coordination point for shikimate. Gly232 contributes to the NADP(+) binding site.

The protein belongs to the shikimate dehydrogenase family. Homodimer.

The enzyme catalyses shikimate + NADP(+) = 3-dehydroshikimate + NADPH + H(+). It participates in metabolic intermediate biosynthesis; chorismate biosynthesis; chorismate from D-erythrose 4-phosphate and phosphoenolpyruvate: step 4/7. Involved in the biosynthesis of the chorismate, which leads to the biosynthesis of aromatic amino acids. Catalyzes the reversible NADPH linked reduction of 3-dehydroshikimate (DHSA) to yield shikimate (SA). In Staphylococcus aureus (strain MSSA476), this protein is Shikimate dehydrogenase (NADP(+)).